Here is a 492-residue protein sequence, read N- to C-terminus: Cytoplasmic dynein 1 light intermediate chain 2 (492 aa).

Gly61–Thr68 is an ATP binding site. 3 disordered regions span residues Glu188–Glu207, Leu370–Ala423, and Leu437–Ala492. Residues Ser194, Ser383, and Ser391 each carry the phosphoserine modification. Positions Leu370 to Ser383 are enriched in polar residues. Arg397 is modified (omega-N-methylarginine). The segment covering Leu437–Gln469 has biased composition (polar residues). The residue at position 441 (Thr441) is a Phosphothreonine. Phosphoserine is present on residues Ser443 and Ser446. Residues Glu471 to Asp480 are compositionally biased toward basic and acidic residues. A compositionally biased stretch (polar residues) spans Met482 to Ala492.

It belongs to the dynein light intermediate chain family. In terms of assembly, homodimer. The cytoplasmic dynein 1 complex consists of two catalytic heavy chains (HCs) and a number of non-catalytic subunits presented by intermediate chains (ICs), light intermediate chains (LICs) and light chains (LCs); the composition seems to vary in respect to the IC, LIC and LC composition. The heavy chain homodimer serves as a scaffold for the probable homodimeric assembly of the respective non-catalytic subunits. The ICs and LICs bind directly to the HC dimer and the LCs assemble on the IC dimer. Interacts with DYNC1H1; DYNC1LI1 and DYNC1LI2 bind mutually exclusive to DYNC1H.

It is found in the cytoplasm. The protein localises to the cytoskeleton. Acts as one of several non-catalytic accessory components of the cytoplasmic dynein 1 complex that are thought to be involved in linking dynein to cargos and to adapter proteins that regulate dynein function. Cytoplasmic dynein 1 acts as a motor for the intracellular retrograde motility of vesicles and organelles along microtubules. May play a role in binding dynein to membranous organelles or chromosomes. The chain is Cytoplasmic dynein 1 light intermediate chain 2 (Dync1li2) from Mus musculus (Mouse).